We begin with the raw amino-acid sequence, 269 residues long: Flagellar brake protein YcgR (269 aa).

One can recognise a PilZ domain in the interval 134–254 (QRRNFYRVTT…SRLLIQRYIT (121 aa)).

This sequence belongs to the YcgR family. In terms of assembly, monomer. Interacts with the flagellar basal bodies.

The protein localises to the bacterial flagellum basal body. Functionally, acts as a flagellar brake, regulating swimming and swarming in a bis-(3'-5') cyclic diguanylic acid (c-di-GMP)-dependent manner. Binds 1 c-di-GMP dimer per subunit. Increasing levels of c-di-GMP lead to decreased motility. This chain is Flagellar brake protein YcgR, found in Nitrosomonas eutropha (strain DSM 101675 / C91 / Nm57).